The sequence spans 247 residues: uncharacterized protein (247 aa).

2 helical membrane passes run 11–31 (LIAP…IYCV) and 39–59 (FIAI…TGLL).

The protein localises to the cell membrane. This is an uncharacterized protein from Haemophilus influenzae (strain ATCC 51907 / DSM 11121 / KW20 / Rd).